Consider the following 314-residue polypeptide: Homoserine O-acetyltransferase (314 aa).

Cysteine 142 functions as the Acyl-thioester intermediate in the catalytic mechanism. Residues lysine 163 and serine 192 each coordinate substrate. Residue histidine 235 is the Proton acceptor of the active site. Glutamate 237 is a catalytic residue. Position 249 (arginine 249) interacts with substrate.

It belongs to the MetA family.

It localises to the cytoplasm. The catalysed reaction is L-homoserine + acetyl-CoA = O-acetyl-L-homoserine + CoA. It functions in the pathway amino-acid biosynthesis; L-methionine biosynthesis via de novo pathway; O-acetyl-L-homoserine from L-homoserine: step 1/1. Its function is as follows. Transfers an acetyl group from acetyl-CoA to L-homoserine, forming acetyl-L-homoserine. The chain is Homoserine O-acetyltransferase from Streptococcus pneumoniae (strain JJA).